The following is an 88-amino-acid chain: MSTTVVKPEIIAQYKTHDKDTGSSEVQVALLTARINHLTEHLRTHRKDFHSRRGLLQMASRRRKLLDYLKKHDLPKYTELLQKLNLRK.

Belongs to the universal ribosomal protein uS15 family. Part of the 30S ribosomal subunit. Forms a bridge to the 50S subunit in the 70S ribosome, contacting the 23S rRNA.

In terms of biological role, one of the primary rRNA binding proteins, it binds directly to 16S rRNA where it helps nucleate assembly of the platform of the 30S subunit by binding and bridging several RNA helices of the 16S rRNA. Its function is as follows. Forms an intersubunit bridge (bridge B4) with the 23S rRNA of the 50S subunit in the ribosome. The sequence is that of Small ribosomal subunit protein uS15 from Opitutus terrae (strain DSM 11246 / JCM 15787 / PB90-1).